The primary structure comprises 278 residues: 4-deoxy-L-threo-5-hexosulose-uronate ketol-isomerase (278 aa).

The Zn(2+) site is built by histidine 196, histidine 198, glutamate 203, and histidine 245.

Belongs to the KduI family. Zn(2+) serves as cofactor.

It catalyses the reaction 5-dehydro-4-deoxy-D-glucuronate = 3-deoxy-D-glycero-2,5-hexodiulosonate. It participates in glycan metabolism; pectin degradation; 2-dehydro-3-deoxy-D-gluconate from pectin: step 4/5. Catalyzes the isomerization of 5-dehydro-4-deoxy-D-glucuronate to 3-deoxy-D-glycero-2,5-hexodiulosonate. The sequence is that of 4-deoxy-L-threo-5-hexosulose-uronate ketol-isomerase from Salmonella heidelberg (strain SL476).